A 138-amino-acid chain; its full sequence is Large ribosomal subunit protein uL16 (138 aa).

Basic residues predominate over residues 1-19 (MLIPKRVKYRRQHRPHRSG). The interval 1–24 (MLIPKRVKYRRQHRPHRSGVSKGG) is disordered.

Belongs to the universal ribosomal protein uL16 family. In terms of assembly, part of the 50S ribosomal subunit.

Its function is as follows. Binds 23S rRNA and is also seen to make contacts with the A and possibly P site tRNAs. This Corynebacterium diphtheriae (strain ATCC 700971 / NCTC 13129 / Biotype gravis) protein is Large ribosomal subunit protein uL16.